Consider the following 183-residue polypeptide: Pentapeptide repeat protein MfpA (183 aa).

The Pentapeptide repeat domain maps to S113 to A147.

The protein belongs to the pentapeptide repeat protein family. Homodimer. Probably interacts with DNA gyrase.

Functionally, might be involved in fluoroquinolone resistance. Inhibits ATP-independent DNA relaxation, ATP-dependent DNA supercoiling and ATP-dependent decatenation by endogenous gyrase, 50% inhibition occurs at 2 uM; inhibition is abolished if GyrA is mutated (Asp-87 to Gly or His). Also inhibits fluoroquinolone-promoted dsDNA cleavage. Increases fluoroquinolone (ciprofloxacin or moxifloxacin) inhibition of gyrase supercoiling activity in a concentration-dependent manner. Inhibits DNA relaxation and supercoiling by E.coli gyrase. Forms a structure that exhibits size, shape and electrostatic similarity to B-form DNA; it may bind to DNA gyrase which is postulated to protect it from fluoroquinolones. The protein is Pentapeptide repeat protein MfpA of Mycobacterium tuberculosis (strain ATCC 25618 / H37Rv).